The sequence spans 113 residues: Large ribosomal subunit protein uL22 (113 aa).

The protein belongs to the universal ribosomal protein uL22 family. Part of the 50S ribosomal subunit.

In terms of biological role, this protein binds specifically to 23S rRNA; its binding is stimulated by other ribosomal proteins, e.g. L4, L17, and L20. It is important during the early stages of 50S assembly. It makes multiple contacts with different domains of the 23S rRNA in the assembled 50S subunit and ribosome. Its function is as follows. The globular domain of the protein is located near the polypeptide exit tunnel on the outside of the subunit, while an extended beta-hairpin is found that lines the wall of the exit tunnel in the center of the 70S ribosome. The chain is Large ribosomal subunit protein uL22 from Symbiobacterium thermophilum (strain DSM 24528 / JCM 14929 / IAM 14863 / T).